Here is a 117-residue protein sequence, read N- to C-terminus: Large ribosomal subunit protein bL20 (117 aa).

Belongs to the bacterial ribosomal protein bL20 family.

Binds directly to 23S ribosomal RNA and is necessary for the in vitro assembly process of the 50S ribosomal subunit. It is not involved in the protein synthesizing functions of that subunit. The polypeptide is Large ribosomal subunit protein bL20 (Wigglesworthia glossinidia brevipalpis).